A 606-amino-acid chain; its full sequence is NADH-ubiquinone oxidoreductase chain 5 (606 aa).

The next 16 membrane-spanning stretches (helical) occupy residues 1-21 (MNLF…PIMV), 35-55 (YVKN…MMYL), 87-107 (LMFM…SMWY), 114-134 (INQF…LVTA), 140-160 (LFIG…WWFG), 171-191 (AILY…WFLS), 211-233 (FPLM…HPWL), 241-261 (TPVS…FLLV), 272-292 (LIQT…AICA), 301-320 (IIAF…IGLN), 325-347 (AFLH…GSII), 366-386 (LPFT…MPFL), 413-433 (LTAT…ALLG), 457-477 (LLIG…PVIT), 482-502 (MPLH…IIAF), and 582-602 (GLIK…MILF).

The protein belongs to the complex I subunit 5 family. As to quaternary structure, core subunit of respiratory chain NADH dehydrogenase (Complex I) which is composed of 45 different subunits.

It localises to the mitochondrion inner membrane. It catalyses the reaction a ubiquinone + NADH + 5 H(+)(in) = a ubiquinol + NAD(+) + 4 H(+)(out). In terms of biological role, core subunit of the mitochondrial membrane respiratory chain NADH dehydrogenase (Complex I) which catalyzes electron transfer from NADH through the respiratory chain, using ubiquinone as an electron acceptor. Essential for the catalytic activity and assembly of complex I. The protein is NADH-ubiquinone oxidoreductase chain 5 (MT-ND5) of Balaenoptera musculus (Blue whale).